Reading from the N-terminus, the 241-residue chain is Outer membrane protein A (241 aa).

5 beta stranded membrane-spanning segments follow: residues 1–8, 13–21, 46–55, 60–67, and 86–94; these read LTAKLSYP, LDIYTRLGG, PVFAGGVEYA, IATRLEYQ, and MLSVGVSYR. Repeat copies occupy residues 105-106, 107-108, 109-110, and 111-112. The interval 105–112 is 4 X 2 AA tandem repeats of A-P; the sequence is APAPAPAP. The 128-residue stretch at 114–241 folds into the OmpA-like domain; sequence VQTKHFTLKS…RRVEIEVKGV (128 aa). A disulfide bond links Cys215 and Cys227.

It belongs to the outer membrane OOP (TC 1.B.6) superfamily. OmpA family. Monomer and homodimer.

The protein localises to the cell outer membrane. With TolR probably plays a role in maintaining the position of the peptidoglycan cell wall in the periplasm. Acts as a porin with low permeability that allows slow penetration of small solutes; an internal gate slows down solute passage. The chain is Outer membrane protein A from Shimwellia blattae (Escherichia blattae).